The primary structure comprises 89 residues: Small ribosomal subunit protein uS15 (89 aa).

Residues 1 to 21 (MAITQERKNQLISEFKTHESD) show a composition bias toward basic and acidic residues. The disordered stretch occupies residues 1-23 (MAITQERKNQLISEFKTHESDTG).

It belongs to the universal ribosomal protein uS15 family. Part of the 30S ribosomal subunit. Forms a bridge to the 50S subunit in the 70S ribosome, contacting the 23S rRNA.

In terms of biological role, one of the primary rRNA binding proteins, it binds directly to 16S rRNA where it helps nucleate assembly of the platform of the 30S subunit by binding and bridging several RNA helices of the 16S rRNA. Forms an intersubunit bridge (bridge B4) with the 23S rRNA of the 50S subunit in the ribosome. This chain is Small ribosomal subunit protein uS15, found in Bacillus velezensis (strain DSM 23117 / BGSC 10A6 / LMG 26770 / FZB42) (Bacillus amyloliquefaciens subsp. plantarum).